The primary structure comprises 392 residues: Selenide, water dikinase 1 (392 aa).

Cys-31 is an active-site residue. ATP contacts are provided by residues Lys-32, 67–69 (GMD), Asp-87, Asp-110, and 161–164 (GGQT). Asp-69 provides a ligand contact to Mg(2+). Mg(2+) is bound at residue Asp-110. Mg(2+) is bound at residue Asp-265.

This sequence belongs to the selenophosphate synthase 1 family. Class II subfamily. As to quaternary structure, homodimer. The cofactor is Mg(2+).

It localises to the cell membrane. Its subcellular location is the nucleus membrane. It catalyses the reaction hydrogenselenide + ATP + H2O = selenophosphate + AMP + phosphate + 2 H(+). Its function is as follows. Synthesizes selenophosphate from selenide and ATP. This Xenopus tropicalis (Western clawed frog) protein is Selenide, water dikinase 1 (sephs1).